A 305-amino-acid chain; its full sequence is CRISPR-associated endonuclease Cas1 (305 aa).

Residues 96-278 (SDKLLYQAKL…EDVLAAGEIQ (183 aa)) are sufficient for cleavage of ssRNA, ssDNA and Holliday junction DNA. Glu141, His208, and Asp221 together coordinate Mg(2+). The segment at 278–305 (QPPAPPEDAQPVAIPLPVSLGDAGHRSS) is disordered.

The protein belongs to the CRISPR-associated endonuclease Cas1 family. As to quaternary structure, homodimer. Part of the Cas1-Cas2 complex. Interacts with RecB, RecC, RuvB, CasC and CasE. Forms a hexamer with 2 Cas1 dimers sandwiching a Cas2 dimer. The DNA lies across a flat surface extending from 1 Cas1 dimer, across the Cas2 dimer and contacting the other Cas1 dimer. Only 1 Cas1 protein from each dimer is catalytic, the other interacts with the Cas2 dimer and possibly target DNA. Mg(2+) is required as a cofactor.

Its subcellular location is the cytoplasm. Nuclease activity partially inhibited by CasE. Functionally, CRISPR (clustered regularly interspaced short palindromic repeat), is an adaptive immune system that provides protection against mobile genetic elements (viruses, transposable elements and conjugative plasmids). CRISPR clusters contain sequences complementary to antecedent mobile elements and target invading nucleic acids. CRISPR clusters are transcribed and processed into CRISPR RNA (crRNA). The Cas1-Cas2 complex is involved in CRISPR adaptation, the first stage of CRISPR immunity, being required for the addition/removal of CRISPR spacers at the leader end of the CRISPR locus. The Cas1-Cas2 complex introduces staggered nicks into both strands of the CRISPR array near the leader repeat and joins the 5'-ends of the repeat strands with the 3'-ends of the new spacer sequence. Spacer DNA integration requires supercoiled target DNA and 3'-OH ends on the inserted (spacer) DNA and probably initiates with a nucleophilic attack of the C 3'-OH end of the protospacer on the minus strand of the first repeat sequence. Expression of Cas1-Cas2 in a strain lacking both genes permits spacer acquisition. Non-specifically binds DNA; the Cas1-Cas2 complex preferentially binds CRISPR-locus DNA. Highest binding is seen to a dual forked DNA complex with 3'-overhangs and a protospacer-adjacent motif-complement specifically positioned. The protospacer DNA lies across a flat surface extending from 1 Cas1 dimer, across the Cas2 dimer and contacting the other Cas1 dimer; the 23 bp-long ds section of the DNA is bracketed by 1 Tyr-22 from each of the Cas1 dimers. Cas1 cuts within the 3'-overhang, to generate a 33-nucleotide DNA that is probably incorporated into the CRISPR leader by a cut-and-paste mechanism. Cas1 alone endonucleolytically cleaves linear ssRNA, ssDNA and short (34 base) dsDNA as well as branched DNA substrates such as Holliday junctions, replication forks and 5'-flap DNA substrates. In vitro catalyzes a concerted transesterification reaction on branched DNA, as would be expected during integration of protospacers into the CRISPR leader sequence; Cas2 is not required in vitro. This reaction requires a 3'-OH group at the branch point. Genetic interactions suggest Cas1 interacts with components of the RecBC and RuvB DNA repair systems. The protein is CRISPR-associated endonuclease Cas1 (ygbT) of Escherichia coli (strain K12).